A 521-amino-acid chain; its full sequence is Maturase K (521 aa).

Belongs to the intron maturase 2 family. MatK subfamily.

The protein resides in the plastid. In terms of biological role, usually encoded in the trnK tRNA gene intron. Probably assists in splicing its own and other chloroplast group II introns. The protein is Maturase K of Cuscuta exaltata (Tall dodder).